Here is a 553-residue protein sequence, read N- to C-terminus: Nucleoside-diphosphatase mig-23 (553 aa).

Residues 1 to 8 lie on the Cytoplasmic side of the membrane; sequence MRVSRRFT. The chain crosses the membrane as a helical span at residues 9–29; the sequence is ILAITAMIFLSLIICIYAVAA. Topologically, residues 30–489 are lumenal; that stretch reads HTTVNVILQK…IVKETHSASE (460 aa). Residue Glu174 is the Proton acceptor of the active site. Asn190 and Asn284 each carry an N-linked (GlcNAc...) asparagine glycan. A helical membrane pass occupies residues 490 to 510; it reads SLWAPLFFLSAVFCLFVLVCA. Topologically, residues 511–553 are cytoplasmic; sequence KEHSLLCFDDKRRASFGLTRRQYSYKMLKEDRTSSSAFLENFA.

It belongs to the GDA1/CD39 NTPase family.

The protein localises to the golgi apparatus membrane. The enzyme catalyses a ribonucleoside 5'-diphosphate + H2O = a ribonucleoside 5'-phosphate + phosphate + H(+). Its function is as follows. Seems to be able to hydrolyze ADP, UDP and GDP. Supports mig-17 glycosylation and surface expression, which is required for proper migration of distal tip cells during gonad morphogenesis. The sequence is that of Nucleoside-diphosphatase mig-23 from Caenorhabditis briggsae.